A 302-amino-acid chain; its full sequence is 4-hydroxy-tetrahydrodipicolinate synthase (302 aa).

T46 contributes to the pyruvate binding site. Catalysis depends on Y135, which acts as the Proton donor/acceptor. Residue K164 is the Schiff-base intermediate with substrate of the active site. V206 lines the pyruvate pocket.

It belongs to the DapA family. In terms of assembly, homotetramer; dimer of dimers.

The protein resides in the cytoplasm. It carries out the reaction L-aspartate 4-semialdehyde + pyruvate = (2S,4S)-4-hydroxy-2,3,4,5-tetrahydrodipicolinate + H2O + H(+). It functions in the pathway amino-acid biosynthesis; L-lysine biosynthesis via DAP pathway; (S)-tetrahydrodipicolinate from L-aspartate: step 3/4. Its function is as follows. Catalyzes the condensation of (S)-aspartate-beta-semialdehyde [(S)-ASA] and pyruvate to 4-hydroxy-tetrahydrodipicolinate (HTPA). The sequence is that of 4-hydroxy-tetrahydrodipicolinate synthase from Acidobacterium capsulatum (strain ATCC 51196 / DSM 11244 / BCRC 80197 / JCM 7670 / NBRC 15755 / NCIMB 13165 / 161).